Here is a 1342-residue protein sequence, read N- to C-terminus: DNA-directed RNA polymerase subunit beta (1342 aa).

Belongs to the RNA polymerase beta chain family. In terms of assembly, the RNAP catalytic core consists of 2 alpha, 1 beta, 1 beta' and 1 omega subunit. When a sigma factor is associated with the core the holoenzyme is formed, which can initiate transcription.

It carries out the reaction RNA(n) + a ribonucleoside 5'-triphosphate = RNA(n+1) + diphosphate. In terms of biological role, DNA-dependent RNA polymerase catalyzes the transcription of DNA into RNA using the four ribonucleoside triphosphates as substrates. This is DNA-directed RNA polymerase subunit beta from Pseudoalteromonas atlantica (strain T6c / ATCC BAA-1087).